The sequence spans 475 residues: MAGAYDPSLPEVPEWLNKGDNAWQLTAATLVGLQSMPGLVILYASIVKKKWAVNSAFMALYAFAAVLLCWVLLCYKMAFGEELLPFWGKGGPAFDQGYLKGQAKIPNSNVAAPYFPMATLVYFQFTFAAITTILVAGSVLGRMNIKAWMAFVPLWLIFSYTVGAYSIWGGGFLYQWGVIDYSGGYVIHLSSGVAGFVAAYWVGPRPKADRERFPPNNVLLMLAGAGLLWMGWSGFNGGAPYAANLTSSIAVLNTNLSAATSLLVWTTLDVIFFGKPSVIGAIQGMVTGLAGVTPGAGLIQTWAAIIIGVVSGTAPWASMMIIHKKSALLQKVDDTLAVFYTHAVAGLLGGIMTGLFAHPDLCVLVLPLPATRGAFYGGNGGKQLLKQLAGAAFIAVWNVVSTTIILLAIRVFIPLRMAEEELGIGDDAAHGEEAYALWGDGEKFDATRHVQQFERDQEAAHPSYVHGARGVTIVL.

11 consecutive transmembrane segments (helical) span residues 27–47 (AATL…ASIV), 55–75 (SAFM…LLCY), 120–140 (LVYF…GSVL), 148–168 (WMAF…YSIW), 183–203 (GGYV…YWVG), 218–238 (VLLM…FNGG), 254–274 (TNLS…IFFG), 279–299 (IGAI…AGLI), 302–322 (WAAI…MMII), 336–356 (LAVF…TGLF), and 389–409 (AGAA…LLAI).

It belongs to the ammonia transporter channel (TC 1.A.11.2) family. In terms of tissue distribution, higher expression in shoots than roots.

The protein localises to the cell membrane. In terms of biological role, high affinity ammonium transporter that may play an important role in moving ammonium between the apoplast and symplast of cells throughout the plant. Does not transport methylammonium. The chain is Ammonium transporter 2 (AMT2) from Arabidopsis thaliana (Mouse-ear cress).